The sequence spans 748 residues: Disintegrin and metalloproteinase domain-containing protein 10 (748 aa).

An N-terminal signal peptide occupies residues 1-19 (MVLLRVLILLLSWVAGLGG). A propeptide spanning residues 20–213 (QYGNPLNKYI…NGPELLRKKR (194 aa)) is cleaved from the precursor. Residues 20–672 (QYGNPLNKYI…SPELYENIAE (653 aa)) lie on the Extracellular side of the membrane. Positions 171-178 (GGCADHSV) match the Cysteine switch motif. A Zn(2+)-binding site is contributed by Cys173. One can recognise a Peptidase M12B domain in the interval 220-456 (NTCQLYIQTD…KRNNCFVESG (237 aa)). Residues Asn267 and Asn278 are each glycosylated (N-linked (GlcNAc...) asparagine). Disulfide bonds link Cys344-Cys451, Cys399-Cys435, Cys460-Cys495, Cys471-Cys484, Cys473-Cys479, Cys483-Cys515, Cys503-Cys511, Cys510-Cys536, Cys524-Cys543, Cys530-Cys562, Cys555-Cys567, Cys572-Cys598, Cys580-Cys607, Cys582-Cys597, Cys594-Cys639, and Cys632-Cys645. Zn(2+) is bound at residue His383. The active site involves Glu384. Zn(2+) is bound by residues His387 and His393. N-linked (GlcNAc...) asparagine glycosylation is present at Asn439. One can recognise a Disintegrin domain in the interval 457 to 551 (QPICGNGMVE…LCPASDPKPN (95 aa)). N-linked (GlcNAc...) asparagine glycosylation is present at Asn551. The helical transmembrane segment at 673–696 (WIVAYWWAVLLMGIALIMLMAGFI) threads the bilayer. Residues 697 to 748 (KICSVHTPSSNPKLPPPKPLPGTLKRRRPPQPIQQPQRQRPRESYQMGHMRR) lie on the Cytoplasmic side of the membrane. The segment at 704 to 748 (PSSNPKLPPPKPLPGTLKRRRPPQPIQQPQRQRPRESYQMGHMRR) is disordered. An SH3-binding motif is present at residues 708–715 (PKLPPPKP). A Phosphothreonine modification is found at Thr719. The SH3-binding signature appears at 722-728 (RRRPPQP). The tract at residues 734 to 748 (RQRPRESYQMGHMRR) is interaction with AP2A1, AP2A2 and AP2M1.

In terms of assembly, forms a ternary EFNA5-EPHA3-ADAM10 complex mediating EFNA5 extracellular domain shedding by ADAM10 which regulates the EFNA5-EPHA3 complex internalization and function, the cleavage occurs in trans, with ADAM10 and its substrate being on the membranes of opposing cells. Interacts with the clathrin adapter AP2 complex subunits AP2A1, AP2A2, AP2B1, and AP2M1; this interaction facilitates ADAM10 endocytosis from the plasma membrane during long-term potentiation in hippocampal neurons. Forms a ternary complex composed of ADAM10, EPHA4 and CADH1; within the complex, ADAM10 cleaves CADH1 which disrupts adherens junctions. Interacts with EPHA2. Interacts with NGF in a divalent cation-dependent manner. Interacts with TSPAN14; the interaction promotes ADAM10 maturation and cell surface expression. Interacts with TSPAN5, TSPAN10, TSPAN14, TSPAN15, TSPAN17 and TSPAN33; these interactions regulate ADAM10 substrate specificity, endocytosis and turnover. Interacts (via extracellular domain) with TSPAN33 (via extracellular domain) and (via cytoplasmic domain) with AFDN; interaction with TSPAN33 allows the docking of ADAM10 to zonula adherens through a PDZ11-dependent interaction between TSPAN33 and PLEKHA7 while interaction with AFDN locks ADAM10 at zonula adherens. Interacts with DLG1; this interaction recruits ADAM10 to the cell membrane during long-term depression in hippocampal neurons. Interacts (via extracellular domain) with BACE1 (via extracellular domain). Interacts with FAM171A1. Zn(2+) serves as cofactor. In terms of processing, the precursor is cleaved by furin and PCSK7. Expressed at low level in kidney, spleen, lung, adrenal, heart and peripheral nerve.

The protein localises to the golgi apparatus membrane. The protein resides in the cell membrane. Its subcellular location is the cytoplasmic vesicle. It localises to the clathrin-coated vesicle. It is found in the cell projection. The protein localises to the axon. The protein resides in the dendrite. Its subcellular location is the cell junction. It localises to the adherens junction. It is found in the cytoplasm. It catalyses the reaction Endopeptidase of broad specificity.. Catalytically inactive when the propeptide is intact and associated with the mature enzyme. The disintegrin and cysteine-rich regions modulate access of substrates to exerts an inhibitory effect on the cleavage of ADAM10 substrates. In terms of biological role, transmembrane metalloprotease which mediates the ectodomain shedding of a myriad of transmembrane proteins, including adhesion proteins, growth factor precursors and cytokines being essential for development and tissue homeostasis. Associates with six members of the tetraspanin superfamily TspanC8 which regulate its exit from the endoplasmic reticulum and its substrate selectivity. Cleaves the membrane-bound precursor of TNF-alpha at '76-Ala-|-Val-77' to its mature soluble form. Responsible for the proteolytical release of soluble JAM3 from endothelial cells surface. Responsible for the proteolytic release of several other cell-surface proteins, including heparin-binding epidermal growth-like factor, ephrin-A2, CD44, CDH2 and for constitutive and regulated alpha-secretase cleavage of amyloid precursor protein (APP). Contributes to the normal cleavage of the cellular prion protein. Involved in the cleavage of the adhesion molecule L1 at the cell surface and in released membrane vesicles, suggesting a vesicle-based protease activity. Also controls the proteolytic processing of Notch and mediates lateral inhibition during neurogenesis. Required for the development of type 1 transitional B cells into marginal zone B cells, probably by cleaving Notch. Responsible for the FasL ectodomain shedding and for the generation of the remnant ADAM10-processed FasL (FasL APL) transmembrane form. Also cleaves the ectodomain of the integral membrane proteins CORIN and ITM2B. Mediates the proteolytic cleavage of LAG3, leading to release the secreted form of LAG3. Mediates the proteolytic cleavage of IL6R and IL11RA, leading to the release of secreted forms of IL6R and IL11RA. Enhances the cleavage of CHL1 by BACE1. Cleaves NRCAM. Cleaves TREM2, resulting in shedding of the TREM2 ectodomain. Involved in the development and maturation of glomerular and coronary vasculature. During development of the cochlear organ of Corti, promotes pillar cell separation by forming a ternary complex with CADH1 and EPHA4 and cleaving CADH1 at adherens junctions. May regulate the EFNA5-EPHA3 signaling. Regulates leukocyte transmigration as a sheddase for the adherens junction protein VE-cadherin/CDH5 in endothelial cells. This is Disintegrin and metalloproteinase domain-containing protein 10 (ADAM10) from Bos taurus (Bovine).